A 268-amino-acid polypeptide reads, in one-letter code: Phosphatidylglycerol--prolipoprotein diacylglyceryl transferase (268 aa).

7 helical membrane-spanning segments follow: residues Ile-23 to Ala-43, Leu-62 to Tyr-82, Val-97 to Trp-117, Phe-132 to Leu-152, Ser-179 to Ile-199, Ala-206 to Val-226, and Gly-241 to Ser-261. Arg-145 contributes to the a 1,2-diacyl-sn-glycero-3-phospho-(1'-sn-glycerol) binding site.

The protein belongs to the Lgt family.

It is found in the cell inner membrane. The enzyme catalyses L-cysteinyl-[prolipoprotein] + a 1,2-diacyl-sn-glycero-3-phospho-(1'-sn-glycerol) = an S-1,2-diacyl-sn-glyceryl-L-cysteinyl-[prolipoprotein] + sn-glycerol 1-phosphate + H(+). Its pathway is protein modification; lipoprotein biosynthesis (diacylglyceryl transfer). Its function is as follows. Catalyzes the transfer of the diacylglyceryl group from phosphatidylglycerol to the sulfhydryl group of the N-terminal cysteine of a prolipoprotein, the first step in the formation of mature lipoproteins. This is Phosphatidylglycerol--prolipoprotein diacylglyceryl transferase from Haemophilus influenzae (strain PittEE).